The primary structure comprises 85 residues: Sodium channel neurotoxin MeuNaTxalpha-2 (85 aa).

Residues 1–19 (MNYLVMISLALLLMTGVES) form the signal peptide. Positions 21-83 (RDAYIANDRN…VPIRIPGECR (63 aa)) constitute an LCN-type CS-alpha/beta domain. Cystine bridges form between Cys-31-Cys-82, Cys-35-Cys-55, Cys-41-Cys-65, and Cys-45-Cys-67. Arg-83 carries the post-translational modification Arginine amide.

Belongs to the long (4 C-C) scorpion toxin superfamily. Sodium channel inhibitor family. Alpha subfamily. As to expression, expressed by the venom gland.

It is found in the secreted. Functionally, alpha toxins bind voltage-independently at site-3 of sodium channels (Nav) and inhibit the inactivation of the activated channels, thereby blocking neuronal transmission. This toxin inhibits inactivation of Nav1.4/SCN4A (EC(50)=2.23 uM) and drosophila DmNav1 (EC(50)=220 nM). The toxin (1 uM) does not significantly shift the midpoint of activation at the two channels, but induces a significant depolarizing shift in the V(1/2) of inactivation of the channels. In addition, the toxin accelerates the recovery from fast inactivation in Nav1.4/SCN4A and DmNav1. It also shows antimicrobial activity. The sequence is that of Sodium channel neurotoxin MeuNaTxalpha-2 from Mesobuthus eupeus (Lesser Asian scorpion).